Here is a 201-residue protein sequence, read N- to C-terminus: Sterile alpha motif domain-containing protein 12 (201 aa).

Residues 77 to 143 (WTQQDVCKWL…LQQVLQLKVR (67 aa)) enclose the SAM domain.

In terms of tissue distribution, expressed in the brain.

This chain is Sterile alpha motif domain-containing protein 12 (SAMD12), found in Homo sapiens (Human).